The following is a 239-amino-acid chain: MSKNSKAYKEAAEKIDRDRVYSPLEAAKLAKETSSKKQDATVEVAIRLGVDPRKADQMVRGTVNLPHGTGKTARVAVFAVGEKAEAAVAAGADVVGSDDLIEKIQGGFLDFDAAIATPDQMAKVGRIARILGPRGLMPNPKTGTVTPDVTKAVNDIKGGKINFRVDKQANLHFVIGKASFDEKALAENYGAALDEILRAKPSSSKGRYLKKVVVSTTTGPGIPVDPTVTRNFTEEPAQS.

This sequence belongs to the universal ribosomal protein uL1 family. In terms of assembly, part of the 50S ribosomal subunit.

Functionally, binds directly to 23S rRNA. The L1 stalk is quite mobile in the ribosome, and is involved in E site tRNA release. In terms of biological role, protein L1 is also a translational repressor protein, it controls the translation of the L11 operon by binding to its mRNA. In Mycolicibacterium gilvum (strain PYR-GCK) (Mycobacterium gilvum (strain PYR-GCK)), this protein is Large ribosomal subunit protein uL1.